Consider the following 372-residue polypeptide: UDP-N-acetylglucosamine--N-acetylmuramyl-(pentapeptide) pyrophosphoryl-undecaprenol N-acetylglucosamine transferase (372 aa).

UDP-N-acetyl-alpha-D-glucosamine-binding positions include 11 to 13 (TAG), Asn123, Arg160, Ser200, and Gln298.

Belongs to the glycosyltransferase 28 family. MurG subfamily.

Its subcellular location is the cell membrane. The enzyme catalyses di-trans,octa-cis-undecaprenyl diphospho-N-acetyl-alpha-D-muramoyl-L-alanyl-D-glutamyl-meso-2,6-diaminopimeloyl-D-alanyl-D-alanine + UDP-N-acetyl-alpha-D-glucosamine = di-trans,octa-cis-undecaprenyl diphospho-[N-acetyl-alpha-D-glucosaminyl-(1-&gt;4)]-N-acetyl-alpha-D-muramoyl-L-alanyl-D-glutamyl-meso-2,6-diaminopimeloyl-D-alanyl-D-alanine + UDP + H(+). The protein operates within cell wall biogenesis; peptidoglycan biosynthesis. In terms of biological role, cell wall formation. Catalyzes the transfer of a GlcNAc subunit on undecaprenyl-pyrophosphoryl-MurNAc-pentapeptide (lipid intermediate I) to form undecaprenyl-pyrophosphoryl-MurNAc-(pentapeptide)GlcNAc (lipid intermediate II). The protein is UDP-N-acetylglucosamine--N-acetylmuramyl-(pentapeptide) pyrophosphoryl-undecaprenol N-acetylglucosamine transferase of Cutibacterium acnes (strain DSM 16379 / KPA171202) (Propionibacterium acnes).